The following is a 448-amino-acid chain: Probable ribonuclease FAU-1 (448 aa).

The interval Glu426–Ala448 is disordered. The segment covering Glu436–Ala448 has biased composition (polar residues).

This sequence belongs to the FAU-1 family.

Functionally, probable RNase involved in rRNA stability through maturation and/or degradation of precursor rRNAs. Binds to RNA in loop regions with AU-rich sequences. This is Probable ribonuclease FAU-1 from Pyrobaculum islandicum (strain DSM 4184 / JCM 9189 / GEO3).